The sequence spans 466 residues: Probable Xaa-Pro aminopeptidase pepP (466 aa).

Residues D264, D275, E398, and E438 each contribute to the Mn(2+) site.

This sequence belongs to the peptidase M24B family. Mn(2+) is required as a cofactor.

The enzyme catalyses Release of any N-terminal amino acid, including proline, that is linked to proline, even from a dipeptide or tripeptide.. Functionally, catalyzes the removal of a penultimate prolyl residue from the N-termini of peptides. This chain is Probable Xaa-Pro aminopeptidase pepP (pepP), found in Aspergillus terreus (strain NIH 2624 / FGSC A1156).